The chain runs to 101 residues: Replication restart protein PriB (101 aa).

The region spanning 1–101 is the SSB domain; sequence MATNHLVLSG…LHAENVELKT (101 aa).

This sequence belongs to the PriB family. In terms of assembly, homodimer. Interacts with PriA and DnaT. Component of the replication restart primosome. Primosome assembly occurs via a 'hand-off' mechanism. PriA binds to replication forks, subsequently PriB then DnaT bind; DnaT then displaces ssDNA to generate the helicase loading substrate.

Functionally, involved in the restart of stalled replication forks, which reloads the replicative helicase on sites other than the origin of replication; the PriA-PriB pathway is the major replication restart pathway. During primosome assembly it facilitates complex formation between PriA and DnaT on DNA; stabilizes PriA on DNA. Stimulates the DNA unwinding activity of PriA helicase. The polypeptide is Replication restart protein PriB (Shewanella woodyi (strain ATCC 51908 / MS32)).